Consider the following 365-residue polypeptide: Aspartate-semialdehyde dehydrogenase (365 aa).

Residues T15, G16, T17, V18, S40, S43, L89, and D90 each contribute to the NADP(+) site. C156 serves as the catalytic Acyl-thioester intermediate. Residue G188 coordinates NADP(+). The active-site Proton acceptor is the H255. Residue N342 participates in NADP(+) binding.

It belongs to the aspartate-semialdehyde dehydrogenase family. In terms of assembly, homotetramer; dimer of dimers.

It localises to the cytoplasm. It is found in the cytosol. The protein resides in the nucleus. It carries out the reaction L-aspartate 4-semialdehyde + phosphate + NADP(+) = 4-phospho-L-aspartate + NADPH + H(+). The protein operates within amino-acid biosynthesis; L-methionine biosynthesis via de novo pathway; L-homoserine from L-aspartate: step 2/3. Its pathway is amino-acid biosynthesis; L-threonine biosynthesis; L-threonine from L-aspartate: step 2/5. Inhibited by the competitive inhibitor 1,4-benzoquinone and derivates such as 2-chloro-3-methoxy-1,4-naphthoquinone, 2,3-dichloro-1,4-naphthoquinone, 2-chloro-1,4-naphthoquinone, 2-bromo-1,4-naphthoquinone and 2,3-dichloro-5,8-dihydroxy-1,4-naphthoquinone. Its function is as follows. Catalyzes the NADPH-dependent formation of L-aspartate 4-semialdehyde (L-ASA) by the reductive dephosphorylation of 4-phospho-L-aspartate. Mediates the second step in the biosynthesis of amino acids that derive from aspartate (the aspartate family of amino acids), including methioinine and threonine, the latter of which is a precursor to isoleucine. The polypeptide is Aspartate-semialdehyde dehydrogenase (Cryptococcus neoformans var. neoformans serotype D (strain JEC21 / ATCC MYA-565) (Filobasidiella neoformans)).